Consider the following 155-residue polypeptide: 6,7-dimethyl-8-ribityllumazine synthase (155 aa).

Residues Phe23, 57 to 59, and 81 to 83 each bind 5-amino-6-(D-ribitylamino)uracil; these read AFE and AVI. 86–87 provides a ligand contact to (2S)-2-hydroxy-3-oxobutyl phosphate; the sequence is ST. The active-site Proton donor is His89. Phe114 serves as a coordination point for 5-amino-6-(D-ribitylamino)uracil. Arg128 is a binding site for (2S)-2-hydroxy-3-oxobutyl phosphate.

It belongs to the DMRL synthase family.

The catalysed reaction is (2S)-2-hydroxy-3-oxobutyl phosphate + 5-amino-6-(D-ribitylamino)uracil = 6,7-dimethyl-8-(1-D-ribityl)lumazine + phosphate + 2 H2O + H(+). Its pathway is cofactor biosynthesis; riboflavin biosynthesis; riboflavin from 2-hydroxy-3-oxobutyl phosphate and 5-amino-6-(D-ribitylamino)uracil: step 1/2. In terms of biological role, catalyzes the formation of 6,7-dimethyl-8-ribityllumazine by condensation of 5-amino-6-(D-ribitylamino)uracil with 3,4-dihydroxy-2-butanone 4-phosphate. This is the penultimate step in the biosynthesis of riboflavin. The sequence is that of 6,7-dimethyl-8-ribityllumazine synthase from Dehalococcoides mccartyi (strain ATCC BAA-2100 / JCM 16839 / KCTC 5957 / BAV1).